Consider the following 755-residue polypeptide: Serine/threonine-protein kinase GL21140 (755 aa).

The span at 18–52 (QASASGSGTPKKTAASSAAAQNSKQLLDQLSQQQK) shows a compositional bias: low complexity. The tract at residues 18–128 (QASASGSGTP…GSANTNGSAS (111 aa)) is disordered. Composition is skewed to basic and acidic residues over residues 53-66 (AQEE…RDCD) and 74-84 (EPEKDLDELRD). Positions 87–99 (GSLTGSGSVGKSN) are enriched in polar residues. The segment covering 100–128 (GSLSGASSTTSAPAGTSTPGSANTNGSAS) has biased composition (low complexity). Doublecortin domains are found at residues 157–243 (HRIK…VDYN) and 314–397 (RIVT…VDDF). The Protein kinase domain occupies 484 to 742 (YTLSQIIGDG…SEDILDHYWT (259 aa)). Residues 490–498 (IGDGNFAIV) and lysine 513 each bind ATP. Catalysis depends on aspartate 605, which acts as the Proton acceptor.

This sequence belongs to the protein kinase superfamily. CAMK Ser/Thr protein kinase family. CaMK subfamily.

The catalysed reaction is L-seryl-[protein] + ATP = O-phospho-L-seryl-[protein] + ADP + H(+). The enzyme catalyses L-threonyl-[protein] + ATP = O-phospho-L-threonyl-[protein] + ADP + H(+). This Drosophila persimilis (Fruit fly) protein is Serine/threonine-protein kinase GL21140.